The following is a 409-amino-acid chain: NADH-quinone oxidoreductase subunit D (409 aa).

Belongs to the complex I 49 kDa subunit family. As to quaternary structure, NDH-1 is composed of 14 different subunits. Subunits NuoB, C, D, E, F, and G constitute the peripheral sector of the complex.

Its subcellular location is the cell inner membrane. It catalyses the reaction a quinone + NADH + 5 H(+)(in) = a quinol + NAD(+) + 4 H(+)(out). Functionally, NDH-1 shuttles electrons from NADH, via FMN and iron-sulfur (Fe-S) centers, to quinones in the respiratory chain. The immediate electron acceptor for the enzyme in this species is believed to be ubiquinone. Couples the redox reaction to proton translocation (for every two electrons transferred, four hydrogen ions are translocated across the cytoplasmic membrane), and thus conserves the redox energy in a proton gradient. The sequence is that of NADH-quinone oxidoreductase subunit D from Helicobacter pylori (strain HPAG1).